The chain runs to 297 residues: N-acetylmuramic acid 6-phosphate etherase (297 aa).

An SIS domain is found at 55–218; that stretch reads AAAALTRGGR…STGAMVKCGK (164 aa). The Proton donor role is filled by Glu83. Residue Glu114 is part of the active site.

Belongs to the GCKR-like family. MurNAc-6-P etherase subfamily. In terms of assembly, homodimer.

The enzyme catalyses N-acetyl-D-muramate 6-phosphate + H2O = N-acetyl-D-glucosamine 6-phosphate + (R)-lactate. The protein operates within amino-sugar metabolism; 1,6-anhydro-N-acetylmuramate degradation. It functions in the pathway amino-sugar metabolism; N-acetylmuramate degradation. Its pathway is cell wall biogenesis; peptidoglycan recycling. Its function is as follows. Specifically catalyzes the cleavage of the D-lactyl ether substituent of MurNAc 6-phosphate, producing GlcNAc 6-phosphate and D-lactate. Together with AnmK, is also required for the utilization of anhydro-N-acetylmuramic acid (anhMurNAc) either imported from the medium or derived from its own cell wall murein, and thus plays a role in cell wall recycling. This chain is N-acetylmuramic acid 6-phosphate etherase, found in Cronobacter sakazakii (strain ATCC BAA-894) (Enterobacter sakazakii).